A 366-amino-acid polypeptide reads, in one-letter code: Putative ankyrin repeat protein RBE_0601 (366 aa).

ANK repeat units follow at residues 39 to 68 (KHGTALNRAIKLKDEKIITELLAKKVDINE), 94 to 124 (LPDEYLYKAVHQGRLDLVQYFIEEKNFDVNT), 131 to 160 (HGGAILSIATMGEHIDVINYLLKNGAIASQ), 162 to 186 (VISAILKGNIEILEKLFEYGATAHD), 210 to 239 (KSSNSETKEDLSNYVETLKFLLEHGGNPNA), and 250 to 280 (IALSALMDEPKNDTYKDICKLLIQYGADTSK).

In Rickettsia bellii (strain RML369-C), this protein is Putative ankyrin repeat protein RBE_0601.